Consider the following 225-residue polypeptide: Small ribosomal subunit protein mS26 (225 aa).

It belongs to the mitochondrion-specific ribosomal protein mS26 family. As to quaternary structure, component of the mitochondrial ribosome small subunit (28S) which comprises a 12S rRNA and about 30 distinct proteins.

It is found in the mitochondrion. This Drosophila melanogaster (Fruit fly) protein is Small ribosomal subunit protein mS26 (mRpS26).